Consider the following 1229-residue polypeptide: ABC transporter B family member 3 (1229 aa).

A helical transmembrane segment spans residues 22–42; the sequence is VLLMIVGSIGAIGNGVGFPLM. The 289-residue stretch at 25–313 folds into the ABC transmembrane type-1 1 domain; the sequence is MIVGSIGAIG…TTPCLTAFAA (289 aa). N-linked (GlcNAc...) asparagine glycosylation is present at asparagine 56. 5 helical membrane-spanning segments follow: residues 73 to 93, 149 to 169, 172 to 192, 252 to 272, and 281 to 301; these read FVYL…CWMI, FIQL…KGWL, LVML…PIIV, GLGL…AIWF, and GYTG…SMSL. One can recognise an ABC transporter 1 domain in the interval 348 to 584; the sequence is IELRDVCFSY…HEGAYAQLIR (237 aa). 383–390 is an ATP binding site; sequence GESGSGKS. Residue asparagine 450 is glycosylated (N-linked (GlcNAc...) asparagine). Residues 594 to 606 show a composition bias toward basic and acidic residues; that stretch reads RLESSNELRDRSI. The segment at 594 to 614 is disordered; sequence RLESSNELRDRSINRGSSRNI. The N-linked (GlcNAc...) asparagine glycan is linked to asparagine 645. A run of 2 helical transmembrane segments spans residues 661 to 681 and 706 to 726; these read ILIL…IFGI and MIFV…TYLF. An ABC transmembrane type-1 2 domain is found at 662 to 949; it reads LILGTLLGAV…ASSFAPDSSK (288 aa). N-linked (GlcNAc...) asparagine glycosylation is present at asparagine 758. The next 3 helical transmembrane spans lie at 797–817, 888–908, and 923–943; these read IIAF…IPLI, GVGF…CFYV, and VFQV…ASSF. In terms of domain architecture, ABC transporter 2 spans 984–1222; the sequence is IELCHISFTY…EGGVYASLVQ (239 aa). 1019-1026 contacts ATP; that stretch reads GESGSGKS. N-linked (GlcNAc...) asparagine glycosylation is found at asparagine 1073 and asparagine 1173.

This sequence belongs to the ABC transporter superfamily. ABCB family. Multidrug resistance exporter (TC 3.A.1.201) subfamily.

It is found in the membrane. The sequence is that of ABC transporter B family member 3 (ABCB3) from Arabidopsis thaliana (Mouse-ear cress).